The sequence spans 195 residues: Neurensin-1 (195 aa).

The next 2 helical transmembrane spans lie at 66 to 86 (LISG…GFLV) and 120 to 140 (AVLF…SVFV).

Belongs to the VMP family. Expressed in brain. Not detectable in other tissues tested.

The protein localises to the membrane. The protein resides in the cell projection. It localises to the neuron projection. Its function is as follows. May play an important role in neural organelle transport, and in transduction of nerve signals or in nerve growth. May play a role in neurite extension. May play a role in memory consolidation. The sequence is that of Neurensin-1 from Homo sapiens (Human).